Here is a 152-residue protein sequence, read N- to C-terminus: Putative membrane protein insertion efficiency factor (152 aa).

The tract at residues 81-152 (AAGGYDPVPG…IVGSGRGPWV (72 aa)) is disordered.

This sequence belongs to the UPF0161 family.

It localises to the cell membrane. Could be involved in insertion of integral membrane proteins into the membrane. The protein is Putative membrane protein insertion efficiency factor of Frankia casuarinae (strain DSM 45818 / CECT 9043 / HFP020203 / CcI3).